Consider the following 156-residue polypeptide: Ribosomal RNA large subunit methyltransferase H (156 aa).

Residues Leu-73, Gly-104, and 123–128 contribute to the S-adenosyl-L-methionine site; that span reads LSPLTF.

This sequence belongs to the RNA methyltransferase RlmH family. Homodimer.

It is found in the cytoplasm. The catalysed reaction is pseudouridine(1915) in 23S rRNA + S-adenosyl-L-methionine = N(3)-methylpseudouridine(1915) in 23S rRNA + S-adenosyl-L-homocysteine + H(+). Functionally, specifically methylates the pseudouridine at position 1915 (m3Psi1915) in 23S rRNA. This is Ribosomal RNA large subunit methyltransferase H from Thioalkalivibrio sulfidiphilus (strain HL-EbGR7).